Here is a 600-residue protein sequence, read N- to C-terminus: NADH-quinone oxidoreductase subunit C/D (600 aa).

The segment at 1–190 (MVNNMTDLTA…DPFELTKAKQ (190 aa)) is NADH dehydrogenase I subunit C. The segment at 214–600 (DFMFLNLGPN…IDFVMSDVDR (387 aa)) is NADH dehydrogenase I subunit D.

The protein in the N-terminal section; belongs to the complex I 30 kDa subunit family. It in the C-terminal section; belongs to the complex I 49 kDa subunit family. In terms of assembly, NDH-1 is composed of 13 different subunits. Subunits NuoB, CD, E, F, and G constitute the peripheral sector of the complex.

Its subcellular location is the cell inner membrane. The enzyme catalyses a quinone + NADH + 5 H(+)(in) = a quinol + NAD(+) + 4 H(+)(out). NDH-1 shuttles electrons from NADH, via FMN and iron-sulfur (Fe-S) centers, to quinones in the respiratory chain. The immediate electron acceptor for the enzyme in this species is believed to be ubiquinone. Couples the redox reaction to proton translocation (for every two electrons transferred, four hydrogen ions are translocated across the cytoplasmic membrane), and thus conserves the redox energy in a proton gradient. The polypeptide is NADH-quinone oxidoreductase subunit C/D (Salmonella paratyphi C (strain RKS4594)).